Here is a 340-residue protein sequence, read N- to C-terminus: TATA-box-binding protein (340 aa).

The interval 1-78 is disordered; that stretch reads MNLNSPAVSM…HSLQGSSMQM (78 aa). Low complexity predominate over residues 57–68; it reads PQSIQPMQSQQM. Polar residues predominate over residues 69–78; sequence HSLQGSSMQM. 2 tandem repeats follow at residues 168 to 244 and 258 to 335.

It belongs to the TBP family. Component of the TFIID basal transcription factor complex, composed of TATA-box-binding protein tbp-1, and a number of TBP-associated factors (TAFs). Binds DNA as monomer.

Its subcellular location is the nucleus. The TFIID basal transcription factor complex plays a major role in the initiation of RNA polymerase II (Pol II)-dependent transcription. TFIID recognizes and binds promoters via its subunit tbp-1, a TATA-box-binding protein, and promotes assembly of the pre-initiation complex (PIC). The TFIID complex consists of tbp-1 and TBP-associated factors (TAFs). General transcription factor that functions at the core of the TFIID complex. The polypeptide is TATA-box-binding protein (tbp-1) (Caenorhabditis elegans).